The chain runs to 447 residues: M-phase inducer phosphatase 3 (447 aa).

Position 2 is an N-acetylserine (Ser2). Residues Ser20, Ser38, Ser56, Ser60, and Ser63 each carry the phosphoserine modification. Thr66 is modified (phosphothreonine; by CDK1). The span at 81-90 (MSASPLTTSA) shows a compositional bias: polar residues. The disordered stretch occupies residues 81–109 (MSASPLTTSADLEDNGSLDSSGPLDRQLT). Ser128 bears the Phosphoserine mark. Thr129 carries the phosphothreonine modification. At Ser192 the chain carries Phosphoserine; by CDK1. Phosphoserine; by PLK3 is present on residues Ser213 and Ser220. The Rhodanese domain occupies 294–401 (VIERFYIIDC…FFPEYMELCD (108 aa)). Residue Cys350 is part of the active site. Ser445 carries the post-translational modification Phosphoserine.

It belongs to the MPI phosphatase family. Interacts with MAPK14 and 14-3-3 proteins. When phosphorylated on Ser-128 and/or Thr-129, interacts with PLK1. Interacts with MARK3/C-TAK1. Post-translationally, phosphorylated by PLK4. Phosphorylated by PLK1, leading to activate the phosphatase activity. Phosphorylated by CHEK1 and MAPKAPK2. This phosphorylation creates a binding site for 14-3-3 protein and inhibits the phosphatase activity. Phosphorylation by PLK3 at Ser-213 promotes nuclear translocation. Ser-220 is a minor phosphorylation site. Phosphorylation by CDK1 occurs at G2 and G2-M transition and leads to increased activity. As to expression, spleen and thymus.

Its subcellular location is the nucleus. It catalyses the reaction O-phospho-L-tyrosyl-[protein] + H2O = L-tyrosyl-[protein] + phosphate. In terms of biological role, functions as a dosage-dependent inducer in mitotic control. Tyrosine protein phosphatase required for progression of the cell cycle. When phosphorylated, highly effective in activating G2 cells into prophase. Directly dephosphorylates CDK1 and activates its kinase activity. In Mus musculus (Mouse), this protein is M-phase inducer phosphatase 3 (Cdc25c).